The primary structure comprises 90 residues: Delta-aiptatoxin-Adi1a (90 aa).

Positions 1 to 21 (MKTAMLIAVLGFCAALCFVES) are cleaved as a signal peptide. Residues 22–44 (SHEEEREAAVYLTDLVSKAESAI) constitute a propeptide that is removed on maturation. 3 disulfides stabilise this stretch: cysteine 50–cysteine 86, cysteine 52–cysteine 77, and cysteine 70–cysteine 87.

Belongs to the sea anemone sodium channel inhibitory toxin family.

The protein localises to the secreted. Its subcellular location is the nematocyst. Cardioactive peptide that acts on voltage-gated sodium channels (hNav1.5/SCN5A) and voltage-gated potassium channels (Kv). The activity on sodium channels consists of inhibition on sodium current inactivation with no significant effect on current activation. This effect may be caused by direct interaction of the toxin with sodium channel site-3. The activity on potassium channels consists of a significant increase of the amplitude of the transient component of the potassium current, shifting the current threshold to more negative membrane potentials. These effects are concentration-dependent and reversible and may be due to a direct interaction between the toxin and the voltage-sensing domain of the channel. Physiologically, this toxin increases the amplitude of cardiomyocyte contraction and slows the late phase of the twitch relaxation velocity with no induction of spontaneous twitching. It increases action potential duration of cardiomyocytes with no effect on its threshold and on the cell resting potential. On insects, it shows neurotoxic activity to the blowfly larvae S.falculaty, causing an immediate spasm that progressed to body contraction and paralysis. The chain is Delta-aiptatoxin-Adi1a from Exaiptasia diaphana (Tropical sea anemone).